Here is a 285-residue protein sequence, read N- to C-terminus: Tryptophan synthase alpha chain (285 aa).

Residues E53 and D64 each act as proton acceptor in the active site.

The protein belongs to the TrpA family. In terms of assembly, tetramer of two alpha and two beta chains.

It catalyses the reaction (1S,2R)-1-C-(indol-3-yl)glycerol 3-phosphate + L-serine = D-glyceraldehyde 3-phosphate + L-tryptophan + H2O. Its pathway is amino-acid biosynthesis; L-tryptophan biosynthesis; L-tryptophan from chorismate: step 5/5. Its function is as follows. The alpha subunit is responsible for the aldol cleavage of indoleglycerol phosphate to indole and glyceraldehyde 3-phosphate. This is Tryptophan synthase alpha chain from Bordetella pertussis (strain Tohama I / ATCC BAA-589 / NCTC 13251).